Consider the following 24-residue polypeptide: Humanin-like 11 (24 aa).

The protein belongs to the humanin family.

It is found in the secreted. The protein resides in the cytoplasm. In terms of biological role, plays a role as a neuroprotective and antiapoptotic factor. The protein is Humanin-like 11 of Homo sapiens (Human).